A 345-amino-acid polypeptide reads, in one-letter code: Methylthioribose-1-phosphate isomerase (345 aa).

Substrate-binding positions include 47–49, Arg-90, and Gln-197; that span reads RGA. Asp-238 acts as the Proton donor in catalysis. 248–249 is a binding site for substrate; that stretch reads NK.

It belongs to the eIF-2B alpha/beta/delta subunits family. MtnA subfamily.

It catalyses the reaction 5-(methylsulfanyl)-alpha-D-ribose 1-phosphate = 5-(methylsulfanyl)-D-ribulose 1-phosphate. It functions in the pathway amino-acid biosynthesis; L-methionine biosynthesis via salvage pathway; L-methionine from S-methyl-5-thio-alpha-D-ribose 1-phosphate: step 1/6. In terms of biological role, catalyzes the interconversion of methylthioribose-1-phosphate (MTR-1-P) into methylthioribulose-1-phosphate (MTRu-1-P). This is Methylthioribose-1-phosphate isomerase from Thermoanaerobacter pseudethanolicus (strain ATCC 33223 / 39E) (Clostridium thermohydrosulfuricum).